Here is a 333-residue protein sequence, read N- to C-terminus: Electron transfer flavoprotein subunit alpha, mitochondrial (333 aa).

The transit peptide at 1–19 directs the protein to the mitochondrion; the sequence is MFRAAAPGQLRRAASSLRF. The domain I stretch occupies residues 20–204; the sequence is QSTLVIAEHA…EISEWLDQKL (185 aa). Lys59 is subject to N6-acetyllysine; alternate. Lys59 is subject to N6-succinyllysine; alternate. Lys62 bears the N6-acetyllysine mark. Lys69 carries the N6-acetyllysine; alternate modification. Lys69 carries the N6-succinyllysine; alternate modification. Lys75 carries the N6-acetyllysine modification. Position 93 is a phosphothreonine (Thr93). Residues Lys101 and Lys139 each carry the N6-acetyllysine modification. Position 140 is a phosphoserine (Ser140). At Lys158 the chain carries N6-acetyllysine; alternate. The residue at position 158 (Lys158) is an N6-succinyllysine; alternate. Lys164 bears the N6-acetyllysine mark. An N6-succinyllysine modification is found at Lys187. At Lys203 the chain carries N6-acetyllysine; alternate. An N6-succinyllysine; alternate modification is found at Lys203. The interval 205–333 is domain II; sequence TKSDRPELTG…PEMTEILKKK (129 aa). Lys216 carries the N6-succinyllysine modification. FAD is bound at residue Arg223. N6-acetyllysine; alternate occurs at positions 226 and 232. N6-succinyllysine; alternate is present on residues Lys226 and Lys232. Residues Ser248, 263–266, 281–286, and Asn300 each bind FAD; these read VGQT and SGAIQH. N6-succinyllysine is present on Lys301. FAD is bound at residue 318 to 319; that stretch reads DL.

It belongs to the ETF alpha-subunit/FixB family. In terms of assembly, heterodimer composed of ETFA and ETFB. Identified in a complex that contains ETFA, ETFB and ETFRF1. Interaction with ETFRF1 promotes dissociation of the bound FAD and loss of electron transfer activity. Interacts with TASOR. Requires FAD as cofactor.

Its subcellular location is the mitochondrion matrix. In terms of biological role, heterodimeric electron transfer flavoprotein that accepts electrons from several mitochondrial dehydrogenases, including acyl-CoA dehydrogenases, glutaryl-CoA and sarcosine dehydrogenase. It transfers the electrons to the main mitochondrial respiratory chain via ETF-ubiquinone oxidoreductase (ETF dehydrogenase). Required for normal mitochondrial fatty acid oxidation and normal amino acid metabolism. This chain is Electron transfer flavoprotein subunit alpha, mitochondrial (ETFA), found in Macaca fascicularis (Crab-eating macaque).